A 428-amino-acid chain; its full sequence is MSTKGEHHTVPLSVLLKRESANEKIDNPELIHGQHNQSKKGEDFTLVKTECQRVMGDGVTTFSVFGLFDGHNGSAAAIYTKENLLNNVLAAIPSDLNRDEWVAALPRALVAGFVKTDKDFQERARTSGTTVTFVIVEGWVVSVASVGDSRCILEPAEGGVYYLSADHRLEINEEERDRVTASGGEVGRLNTGGGTEIGPLRCWPGGLCLSRSIGDLDVGEYIVPVPYVKQVKLSSAGGRLIISSDGVWDAISAEEALDCCRGLPPESSAEHIVKEAVGKKGIRDDTTCIVVDILPLEKPAASVPPPKKQGKGMLKSMFKRKTSDSSSNIEKEYAEPDVVEELFEEGSAMLSERLDTKYPLCNMFKLFMCAVCQVEVKPGEGVSIHAGSDNCRKLRPWDGPFLCASCQDKKDAMEGKRSSGDRHSSESD.

One can recognise a PPM-type phosphatase domain in the interval 24–293; it reads KIDNPELIHG…DDTTCIVVDI (270 aa). 4 residues coordinate Mn(2+): Asp-69, Gly-70, Asp-245, and Asp-284. The interval 301–331 is disordered; it reads ASVPPPKKQGKGMLKSMFKRKTSDSSSNIEK.

The protein belongs to the PP2C family. It depends on Mg(2+) as a cofactor. Mn(2+) serves as cofactor.

It carries out the reaction O-phospho-L-seryl-[protein] + H2O = L-seryl-[protein] + phosphate. The catalysed reaction is O-phospho-L-threonyl-[protein] + H2O = L-threonyl-[protein] + phosphate. This chain is Probable protein phosphatase 2C 12, found in Arabidopsis thaliana (Mouse-ear cress).